The sequence spans 226 residues: LexA repressor (226 aa).

The H-T-H motif DNA-binding region spans 42–62; the sequence is MREIGDAVGLASLSSVTHQLN. Catalysis depends on for autocatalytic cleavage activity residues Ser-150 and Lys-187.

This sequence belongs to the peptidase S24 family. In terms of assembly, homodimer.

It catalyses the reaction Hydrolysis of Ala-|-Gly bond in repressor LexA.. Its function is as follows. Represses a number of genes involved in the response to DNA damage (SOS response), including recA and lexA. In the presence of single-stranded DNA, RecA interacts with LexA causing an autocatalytic cleavage which disrupts the DNA-binding part of LexA, leading to derepression of the SOS regulon and eventually DNA repair. This chain is LexA repressor, found in Clavibacter sepedonicus (Clavibacter michiganensis subsp. sepedonicus).